Here is a 922-residue protein sequence, read N- to C-terminus: Isoleucine--tRNA ligase (922 aa).

The short motif at 57–67 (PYANGDIHMGH) is the 'HIGH' region element. Glu553 provides a ligand contact to L-isoleucyl-5'-AMP. Positions 594-598 (KMSKS) match the 'KMSKS' region motif. ATP is bound at residue Lys597. Residues Cys889, Cys892, Cys909, and Cys912 each contribute to the Zn(2+) site.

The protein belongs to the class-I aminoacyl-tRNA synthetase family. IleS type 1 subfamily. As to quaternary structure, monomer. Zn(2+) serves as cofactor.

The protein localises to the cytoplasm. The enzyme catalyses tRNA(Ile) + L-isoleucine + ATP = L-isoleucyl-tRNA(Ile) + AMP + diphosphate. In terms of biological role, catalyzes the attachment of isoleucine to tRNA(Ile). As IleRS can inadvertently accommodate and process structurally similar amino acids such as valine, to avoid such errors it has two additional distinct tRNA(Ile)-dependent editing activities. One activity is designated as 'pretransfer' editing and involves the hydrolysis of activated Val-AMP. The other activity is designated 'posttransfer' editing and involves deacylation of mischarged Val-tRNA(Ile). In Bacillus licheniformis (strain ATCC 14580 / DSM 13 / JCM 2505 / CCUG 7422 / NBRC 12200 / NCIMB 9375 / NCTC 10341 / NRRL NRS-1264 / Gibson 46), this protein is Isoleucine--tRNA ligase.